Consider the following 271-residue polypeptide: MSRELIRTVDAWNKVKIARDPNRPNTKFYINEIFDEFIELHGDRNFGDDKAIIGGIALLNNLSFTVVGICKGENTKENIKRNFGMPHPEGYRKALRLMKQAEKFKRPVICFVDTPGAFCGIGAEERGQGQAIAQNLVELIGLKVPLISIVIGEGGSGGALALAVADKVFMLEHSIYSVLSPEGFASILWKDSSRAEEAASVMKITAQDLKRFNIIDKIIKEPRGGAHKNPIKMAQNIKKTILEALGEMKGTDLDTLLNERYNKYRNIENNL.

The 247-residue stretch at 1-247 (MSRELIRTVD…KKTILEALGE (247 aa)) folds into the CoA carboxyltransferase C-terminal domain.

It belongs to the AccA family. As to quaternary structure, acetyl-CoA carboxylase is a heterohexamer composed of biotin carboxyl carrier protein (AccB), biotin carboxylase (AccC) and two subunits each of ACCase subunit alpha (AccA) and ACCase subunit beta (AccD).

The protein localises to the cytoplasm. The catalysed reaction is N(6)-carboxybiotinyl-L-lysyl-[protein] + acetyl-CoA = N(6)-biotinyl-L-lysyl-[protein] + malonyl-CoA. The protein operates within lipid metabolism; malonyl-CoA biosynthesis; malonyl-CoA from acetyl-CoA: step 1/1. Its function is as follows. Component of the acetyl coenzyme A carboxylase (ACC) complex. First, biotin carboxylase catalyzes the carboxylation of biotin on its carrier protein (BCCP) and then the CO(2) group is transferred by the carboxyltransferase to acetyl-CoA to form malonyl-CoA. This Clostridium perfringens (strain SM101 / Type A) protein is Acetyl-coenzyme A carboxylase carboxyl transferase subunit alpha.